We begin with the raw amino-acid sequence, 751 residues long: MSNESKCPFHQTAGGGTTNRDWWPDQLNLRILHQHSSKSSPDPDFDYAKAFKSLDFQALKKDLTALMTDSQDWWPADFGHYGPLFIRMAWHSAGTYRIGDGRGGAGSGQQRFAPLNSWPDNVSLDKARRLLWPIKQKYGNKISWADLIVLTGNVALESMGFKTFGFSGGRADVWEPDEDVYWGSEKVWLGGDTRYGKDQVKAQPPGQGDLVAEPAKHGEEQNRDLSAERNLENPLAAVQMGLIYVNPEGPEGNPDPVASGKDIRETFGRMAMNDEETVALIAGGHAFGKTHGAGPADNVGPEPEAAGLEMQGLGWHNTFGSGKGGDTITSGLEVTWTSTPTRWSNEYLNNLFDFEWELTKSPAGAHQWRPKDGKGAGTVPDAHDPGKRHAPSMLTSDLALRFDPIYEPIARHFKENPDQLADAFARAWYKLIHRDMGPLARYLGPEMPNEELLWQDPLPKADPSTISEQDIATLKSRILASGLSVGELVSTAWASASTFRGSDKRGGANGARLRLAPQKDWAANQGVDKVLAALEKIQGEFNSSGKKVSLADLIVLAGTAAVEKAAKDAGYSGSVGFRPGRVDASQEQTDVESFAVLEPLADGFRNFTKARYSVKAEKLLLDKAQLLTLTAPELTVLIGGLRVLGANHGGSKLGVFTDKPGTLSNDFFRNLLDMSVEWKPTSADNETFEGRDRKTGQVKWSGSRVDLVFGSHAQLRALSEVYASSDGGDKFVRDFVAAWQKVMELDRFDLK.

A disordered region spans residues 1–21 (MSNESKCPFHQTAGGGTTNRD). Positions 90–244 (WHSAGTYRIG…LAAVQMGLIY (155 aa)) form a cross-link, tryptophyl-tyrosyl-methioninium (Trp-Tyr) (with M-270). His91 (proton acceptor) is an active-site residue. Residues 195–227 (YGKDQVKAQPPGQGDLVAEPAKHGEEQNRDLSA) form a disordered region. Basic and acidic residues predominate over residues 214-227 (PAKHGEEQNRDLSA). The tryptophyl-tyrosyl-methioninium (Tyr-Met) (with W-90) cross-link spans 244–270 (YVNPEGPEGNPDPVASGKDIRETFGRM). His285 provides a ligand contact to heme b. The segment at 364–385 (GAHQWRPKDGKGAGTVPDAHDP) is disordered.

It belongs to the peroxidase family. Peroxidase/catalase subfamily. As to quaternary structure, homodimer or homotetramer. Heme b is required as a cofactor. In terms of processing, formation of the three residue Trp-Tyr-Met cross-link is important for the catalase, but not the peroxidase activity of the enzyme.

The enzyme catalyses H2O2 + AH2 = A + 2 H2O. It carries out the reaction 2 H2O2 = O2 + 2 H2O. Functionally, bifunctional enzyme with both catalase and broad-spectrum peroxidase activity. The protein is Catalase-peroxidase of Pseudomonas putida (strain ATCC 47054 / DSM 6125 / CFBP 8728 / NCIMB 11950 / KT2440).